The primary structure comprises 205 residues: Dephospho-CoA kinase (205 aa).

The DPCK domain occupies 6-205 (RIGLTGGIAA…EIYAGWCAGR (200 aa)). 14–19 (AAGKST) lines the ATP pocket.

This sequence belongs to the CoaE family.

Its subcellular location is the cytoplasm. It carries out the reaction 3'-dephospho-CoA + ATP = ADP + CoA + H(+). Its pathway is cofactor biosynthesis; coenzyme A biosynthesis; CoA from (R)-pantothenate: step 5/5. Functionally, catalyzes the phosphorylation of the 3'-hydroxyl group of dephosphocoenzyme A to form coenzyme A. This chain is Dephospho-CoA kinase, found in Bifidobacterium longum (strain NCC 2705).